A 420-amino-acid chain; its full sequence is Cysteate-C-fatty acyltransferase (420 aa).

Residues 114 to 115 (GY), histidine 219, threonine 247, and alanine 249 contribute to the pyridoxal 5'-phosphate site. Lysine 250 is modified (N6-(pyridoxal phosphate)lysine).

This sequence belongs to the class-II pyridoxal-phosphate-dependent aminotransferase family. The cofactor is pyridoxal 5'-phosphate.

It carries out the reaction isopentadecanoyl-CoA + L-cysteate + H(+) = 3-oxocapnine + CO2 + CoA. Its pathway is lipid metabolism. Its function is as follows. Transferase involved in the biosynthesis of capnine, a sulfonolipid present in the outer membrane of gliding Bacteroidetes and essential for gliding motility. Catalyzes the formation of 3-dehydrocapnine from cysteate and isopentadecanoyl-CoA (13-methyl-myristoyl-CoA). In vitro, products are also detected when 13-methyl-myristic acid is substituted with tridecylic acid, myristic acid, pentadecanoic acid or palmitic acid. In Capnocytophaga ochracea (strain ATCC 27872 / DSM 7271 / CCUG 9716 / JCM 12966 / NCTC 12371 / SS31 / VPI 2845) (Bacteroides ochraceus), this protein is Cysteate-C-fatty acyltransferase.